An 829-amino-acid chain; its full sequence is Periplasmic nitrate reductase (829 aa).

The segment at residues 1–29 (MKMTRRAFVKANAAASAAAVAGVTLPASA) is a signal peptide (tat-type signal). The 4Fe-4S Mo/W bis-MGD-type domain occupies 41–97 (IKWDKAPCRFCGTGCSVLVGTQNGRVVATQGDPEAPVNKGLNCIKGYFLSKIMYGKD). Positions 48, 51, 55, and 83 each coordinate [4Fe-4S] cluster. Mo-bis(molybdopterin guanine dinucleotide) is bound by residues K85, Q152, N177, C181, 214–221 (WGSNMAEM), 245–249 (STYYH), 264–266 (QSD), M374, Q378, N484, 510–511 (SD), K533, D560, and 718–727 (TGRVLEHWHT). F794 is a substrate binding site. The Mo-bis(molybdopterin guanine dinucleotide) site is built by N802 and K819.

The protein belongs to the prokaryotic molybdopterin-containing oxidoreductase family. NasA/NapA/NarB subfamily. As to quaternary structure, component of the periplasmic nitrate reductase NapAB complex composed of NapA and NapB. [4Fe-4S] cluster is required as a cofactor. It depends on Mo-bis(molybdopterin guanine dinucleotide) as a cofactor. Predicted to be exported by the Tat system. The position of the signal peptide cleavage has not been experimentally proven.

The protein resides in the periplasm. The enzyme catalyses 2 Fe(II)-[cytochrome] + nitrate + 2 H(+) = 2 Fe(III)-[cytochrome] + nitrite + H2O. Functionally, catalytic subunit of the periplasmic nitrate reductase complex NapAB. Receives electrons from NapB and catalyzes the reduction of nitrate to nitrite. This Aliivibrio fischeri (strain ATCC 700601 / ES114) (Vibrio fischeri) protein is Periplasmic nitrate reductase.